Here is a 150-residue protein sequence, read N- to C-terminus: D-aminoacyl-tRNA deacylase (150 aa).

The short motif at 138–139 (GP) is the Gly-cisPro motif, important for rejection of L-amino acids element.

It belongs to the DTD family. Homodimer.

It is found in the cytoplasm. The enzyme catalyses glycyl-tRNA(Ala) + H2O = tRNA(Ala) + glycine + H(+). It carries out the reaction a D-aminoacyl-tRNA + H2O = a tRNA + a D-alpha-amino acid + H(+). Functionally, an aminoacyl-tRNA editing enzyme that deacylates mischarged D-aminoacyl-tRNAs. Also deacylates mischarged glycyl-tRNA(Ala), protecting cells against glycine mischarging by AlaRS. Acts via tRNA-based rather than protein-based catalysis; rejects L-amino acids rather than detecting D-amino acids in the active site. By recycling D-aminoacyl-tRNA to D-amino acids and free tRNA molecules, this enzyme counteracts the toxicity associated with the formation of D-aminoacyl-tRNA entities in vivo and helps enforce protein L-homochirality. This is D-aminoacyl-tRNA deacylase from Chlorobaculum tepidum (strain ATCC 49652 / DSM 12025 / NBRC 103806 / TLS) (Chlorobium tepidum).